We begin with the raw amino-acid sequence, 309 residues long: Pantothenate kinase (309 aa).

92-99 (GSVAVGKT) lines the ATP pocket.

Belongs to the prokaryotic pantothenate kinase family.

It localises to the cytoplasm. It carries out the reaction (R)-pantothenate + ATP = (R)-4'-phosphopantothenate + ADP + H(+). It participates in cofactor biosynthesis; coenzyme A biosynthesis; CoA from (R)-pantothenate: step 1/5. In Lactiplantibacillus plantarum (strain ATCC BAA-793 / NCIMB 8826 / WCFS1) (Lactobacillus plantarum), this protein is Pantothenate kinase (coaA).